The sequence spans 421 residues: UDP-N-acetylglucosamine 1-carboxyvinyltransferase (421 aa).

22–23 (KN) contributes to the phosphoenolpyruvate binding site. Residue arginine 92 participates in UDP-N-acetyl-alpha-D-glucosamine binding. Cysteine 116 serves as the catalytic Proton donor. At cysteine 116 the chain carries 2-(S-cysteinyl)pyruvic acid O-phosphothioketal. The UDP-N-acetyl-alpha-D-glucosamine site is built by aspartate 307 and valine 329.

This sequence belongs to the EPSP synthase family. MurA subfamily.

The protein localises to the cytoplasm. It catalyses the reaction phosphoenolpyruvate + UDP-N-acetyl-alpha-D-glucosamine = UDP-N-acetyl-3-O-(1-carboxyvinyl)-alpha-D-glucosamine + phosphate. Its pathway is cell wall biogenesis; peptidoglycan biosynthesis. Cell wall formation. Adds enolpyruvyl to UDP-N-acetylglucosamine. The protein is UDP-N-acetylglucosamine 1-carboxyvinyltransferase of Kosmotoga olearia (strain ATCC BAA-1733 / DSM 21960 / TBF 19.5.1).